A 303-amino-acid chain; its full sequence is Nucleotide-binding protein SAR0820 (303 aa).

18–25 provides a ligand contact to ATP; that stretch reads GLSGAGKS. 69-72 contributes to the GTP binding site; that stretch reads DLRG.

Belongs to the RapZ-like family.

Functionally, displays ATPase and GTPase activities. In Staphylococcus aureus (strain MRSA252), this protein is Nucleotide-binding protein SAR0820.